The primary structure comprises 194 residues: Ion-translocating oxidoreductase complex subunit A (194 aa).

The next 6 helical transmembrane spans lie at 1–21 (MVMH…FILV), 48–68 (CVIV…LIPF), 73–93 (LCTM…EIIV), 103–123 (LLGI…IPLM), 135–155 (VLYG…FSSI), and 172–192 (PIAL…DGLI).

Belongs to the NqrDE/RnfAE family. As to quaternary structure, the complex is composed of six subunits: RnfA, RnfB, RnfC, RnfD, RnfE and RnfG.

The protein localises to the cell inner membrane. Its function is as follows. Part of a membrane-bound complex that couples electron transfer with translocation of ions across the membrane. The protein is Ion-translocating oxidoreductase complex subunit A of Buchnera aphidicola subsp. Baizongia pistaciae (strain Bp).